We begin with the raw amino-acid sequence, 31 residues long: Conotoxin (31 aa).

The protein belongs to the conotoxin S superfamily. Post-translationally, contains 5 disulfide bonds. Expressed by the venom duct.

The protein localises to the secreted. The chain is Conotoxin from Conus striatus (Striated cone).